The chain runs to 177 residues: Peptidyl-tRNA hydrolase (177 aa).

Tyr-14 lines the tRNA pocket. His-19 acts as the Proton acceptor in catalysis. TRNA contacts are provided by Phe-64, Asn-66, and Asn-112.

Belongs to the PTH family. Monomer.

It localises to the cytoplasm. The catalysed reaction is an N-acyl-L-alpha-aminoacyl-tRNA + H2O = an N-acyl-L-amino acid + a tRNA + H(+). Functionally, hydrolyzes ribosome-free peptidyl-tRNAs (with 1 or more amino acids incorporated), which drop off the ribosome during protein synthesis, or as a result of ribosome stalling. In terms of biological role, catalyzes the release of premature peptidyl moieties from peptidyl-tRNA molecules trapped in stalled 50S ribosomal subunits, and thus maintains levels of free tRNAs and 50S ribosomes. This Latilactobacillus sakei (Lactobacillus sakei) protein is Peptidyl-tRNA hydrolase.